Consider the following 564-residue polypeptide: Chaperonin GroEL 2 (564 aa).

ATP contacts are provided by residues 29 to 32 (TIGP), 86 to 90 (DGTTT), Gly413, and Asp493. Residues 521 to 541 (DKPEPPAPAGDGGGDPMGGMG) form a disordered region. Positions 530 to 541 (GDGGGDPMGGMG) are enriched in gly residues.

This sequence belongs to the chaperonin (HSP60) family. Forms a cylinder of 14 subunits composed of two heptameric rings stacked back-to-back. Interacts with the co-chaperonin GroES.

Its subcellular location is the cytoplasm. It carries out the reaction ATP + H2O + a folded polypeptide = ADP + phosphate + an unfolded polypeptide.. In terms of biological role, together with its co-chaperonin GroES, plays an essential role in assisting protein folding. The GroEL-GroES system forms a nano-cage that allows encapsulation of the non-native substrate proteins and provides a physical environment optimized to promote and accelerate protein folding. The polypeptide is Chaperonin GroEL 2 (Prochlorococcus marinus (strain MIT 9303)).